Consider the following 252-residue polypeptide: Imidazole glycerol phosphate synthase subunit HisF (252 aa).

Catalysis depends on residues aspartate 11 and aspartate 130.

It belongs to the HisA/HisF family. In terms of assembly, heterodimer of HisH and HisF.

The protein localises to the cytoplasm. It catalyses the reaction 5-[(5-phospho-1-deoxy-D-ribulos-1-ylimino)methylamino]-1-(5-phospho-beta-D-ribosyl)imidazole-4-carboxamide + L-glutamine = D-erythro-1-(imidazol-4-yl)glycerol 3-phosphate + 5-amino-1-(5-phospho-beta-D-ribosyl)imidazole-4-carboxamide + L-glutamate + H(+). The protein operates within amino-acid biosynthesis; L-histidine biosynthesis; L-histidine from 5-phospho-alpha-D-ribose 1-diphosphate: step 5/9. Its function is as follows. IGPS catalyzes the conversion of PRFAR and glutamine to IGP, AICAR and glutamate. The HisF subunit catalyzes the cyclization activity that produces IGP and AICAR from PRFAR using the ammonia provided by the HisH subunit. This chain is Imidazole glycerol phosphate synthase subunit HisF, found in Bacillus cereus (strain ZK / E33L).